We begin with the raw amino-acid sequence, 427 residues long: Histidine--tRNA ligase (427 aa).

This sequence belongs to the class-II aminoacyl-tRNA synthetase family. In terms of assembly, homodimer.

It localises to the cytoplasm. The enzyme catalyses tRNA(His) + L-histidine + ATP = L-histidyl-tRNA(His) + AMP + diphosphate + H(+). This Chloroherpeton thalassium (strain ATCC 35110 / GB-78) protein is Histidine--tRNA ligase.